A 349-amino-acid polypeptide reads, in one-letter code: MVTYKDAGVDIYKEDKVIRALASQIKFERTDAIKPADLKGHYAGAIEFGDYYLVLCTDGVGSKMVVAEMANKFDTVPIDMIAMNVNDAICIGAEPVALVDYMAVEDITEDIASQIGKGLNDGIKESNINLIGGETASLPNMIKGVDLAGTVLAVVKKDEIVSGKEVKPGNVIVGLRSSGIHSNGLSLARKVFFEISNLDVKSKLSHGKTVAEELLTPTKIYVKPVLEMIKQVNVKGLAHITGGGFRKLKRLNKDVCYKIDELPEILPIFKEIQNLGNVADQEMFKTFNMGIGFCVIVEKDDAEKIIEISNHHNIAAFVIGKIEESVEVNGETKRETVLVEYNNKKMIME.

The protein belongs to the AIR synthase family.

The protein localises to the cytoplasm. The catalysed reaction is 2-formamido-N(1)-(5-O-phospho-beta-D-ribosyl)acetamidine + ATP = 5-amino-1-(5-phospho-beta-D-ribosyl)imidazole + ADP + phosphate + H(+). Its pathway is purine metabolism; IMP biosynthesis via de novo pathway; 5-amino-1-(5-phospho-D-ribosyl)imidazole from N(2)-formyl-N(1)-(5-phospho-D-ribosyl)glycinamide: step 2/2. The chain is Phosphoribosylformylglycinamidine cyclo-ligase from Methanococcus maripaludis (strain C7 / ATCC BAA-1331).